A 232-amino-acid polypeptide reads, in one-letter code: MLTRKQYELLRFINERLKESGIPPSFDEMKDALDLRSKSGIHRLITALEERGFIRRLANRARAIEVIKLPEPALGSGGRRGFTPSVIEGNLGKARGPASFDESGEQPVAVPVMGRIAAGTPIEALQTRSHTISVPPDMLGAGEHYALEVRGDSMVEAGILDGDMALIQRSENADTGDIVVALIDEEEATLKRFRRRGASIALEPANTAYEVRILPPNRVRIQGKLIGLYRKY.

Residues 26–46 constitute a DNA-binding region (H-T-H motif); it reads FDEMKDALDLRSKSGIHRLIT. Catalysis depends on for autocatalytic cleavage activity residues S153 and K191.

The protein belongs to the peptidase S24 family. Homodimer.

The catalysed reaction is Hydrolysis of Ala-|-Gly bond in repressor LexA.. Its function is as follows. Represses a number of genes involved in the response to DNA damage (SOS response), including recA and lexA. In the presence of single-stranded DNA, RecA interacts with LexA causing an autocatalytic cleavage which disrupts the DNA-binding part of LexA, leading to derepression of the SOS regulon and eventually DNA repair. The sequence is that of LexA repressor from Afipia carboxidovorans (strain ATCC 49405 / DSM 1227 / KCTC 32145 / OM5) (Oligotropha carboxidovorans).